The sequence spans 79 residues: Protein FAM236C (79 aa).

The tract at residues 19-48 (KGPQKDPEELVAVSDTAEDPSSGTGLPREP) is disordered.

This sequence belongs to the FAM236 family.

The sequence is that of Protein FAM236C from Homo sapiens (Human).